The chain runs to 959 residues: MTVRTPGTPASKIDKTPATTPNGHRGREEKIVVTVRLRPLNKRELSAKDHAAWECIDDHTIIYRPVPQERAAQPASSFTFDKVFGPDSITEAVYEEGVKNVALSSLMGINATIFAYGQTSSGKTYTMRGITEKAVNDIYAHIMSTPEREFRIRISGLEIYNENVRDLLNSESGRSLKLLDDPEKGTVVEKLVEETASNDQHLRHLISICEAQRQVGETALNDTSSRSHQIIRLTIESTLRESSDCVRSYVASLNFVDLAGSERASQTNADGARLREGCHINLSLMTLTTVIRKLSVGKRSGHIPYRDSKLTRILQHSLGGNARTAIICTLSPASSHVEQSRNTLYFATRAKEVTNNAQVNMVVSDKQLVKHLQKEVARLEAELRTPDPANEKDWKIQQMEMEIEELKRQRDLAQSQVDELRRKLQEEQGPKPSESVSPVVKKCLSFSGTLSPNLEEKAPVRSERTRNTMGRQSMRQSLAAPFTLMHEIRKLEHLQEQLGDEANRALEVLQKEVACHRLGNQDAAETIAKLQAEIREMRSIRPLPKEVEVGSVVAVNKSVSANLKEEIARLHSQGSTIADLEEQLENVQKSLDKLVMSLPSNNDQQSNNDTTQKAKHPSKKKKLLPLTSSNSINRQNFLKSPCSPLSTARQVLDCEVENRAPDSDDLSCEIQPDETPTKSDGGDVSSKEGTPYRRSSSVNMRKMQKMFQEAAEENVRNIRSYVTELKERVAKLQYQKQLLVCQVLELEANEAAGYNLEDDENIHQIPEESPVSWQITFKEQRQQIIDLWDVCYVSIIHRSQFYLLFKGDPADEIYLEVELRRLTWLQQHLAELGNATPARVGNEPTVSLSSSIRALKREREFLAKRLTTRLTAEERDYLYIKWEVPLEGKQRRMQFINKLWTNPHDAKHVHESAEIVAKLVGFCEGGNMSREMFELNFVLPSDRRPWFAGWNQISDLLHI.

The disordered stretch occupies residues 1–28; the sequence is MTVRTPGTPASKIDKTPATTPNGHRGRE. Residues 30–353 enclose the Kinesin motor domain; it reads KIVVTVRLRP…LYFATRAKEV (324 aa). An ATP-binding site is contributed by 117–124; the sequence is GQTSSGKT. Residue threonine 145 is modified to Phosphothreonine. Positions 362 to 429 form a coiled coil; sequence VVSDKQLVKH…LRRKLQEEQG (68 aa). Disordered regions lie at residues 417 to 438, 451 to 473, 598 to 640, and 658 to 700; these read VDEL…SVSP, SPNL…GRQS, LPSN…FLKS, and NRAP…SVNM. 2 stretches are compositionally biased toward basic and acidic residues: residues 418–429 and 454–466; these read DELRRKLQEEQG and LEEK…ERTR. A coiled-coil region spans residues 557 to 598; sequence KSVSANLKEEIARLHSQGSTIADLEEQLENVQKSLDKLVMSL. The segment covering 600-611 has biased composition (low complexity); it reads SNNDQQSNNDTT. Residues 613 to 623 show a composition bias toward basic residues; sequence KAKHPSKKKKL. Polar residues predominate over residues 630–640; sequence NSINRQNFLKS. Threonine 675 and threonine 690 each carry phosphothreonine. The interval 685–756 is required for the binding to NPK1; sequence SSKEGTPYRR…EANEAAGYNL (72 aa).

It belongs to the TRAFAC class myosin-kinesin ATPase superfamily. Kinesin family. KIN-7 subfamily. Interacts (via C-terminus) with NPK1 (via C-terminus). Post-translationally, phosphorylated at Thr-145, Thr-675 and Thr-690 by CDKAs and CDKBs. The phosphorylation occurs before metaphase and inhibits the interaction with NPK1 preventing the transition to cytokinesis.

The protein resides in the cytoplasm. The protein localises to the nucleus. It localises to the cytoskeleton. Its subcellular location is the phragmoplast. In terms of biological role, probable plus end-directed motor protein that functions in the NACK-PQR (NPK1-NQK1/MEK1-NRK1) MAP kinase signaling pathway, which is essential for somatic cell cytokinesis, especially for the cell-plate formation and its expansion. Regulates the activity and the localization of NPK1 by association through the non-catalytic region of the kinase. This chain is Kinesin-like protein NACK1 (NACK1), found in Nicotiana tabacum (Common tobacco).